The following is a 116-amino-acid chain: Ribosome-binding factor A (116 aa).

This sequence belongs to the RbfA family. As to quaternary structure, monomer. Binds 30S ribosomal subunits, but not 50S ribosomal subunits or 70S ribosomes.

It localises to the cytoplasm. Its function is as follows. One of several proteins that assist in the late maturation steps of the functional core of the 30S ribosomal subunit. Associates with free 30S ribosomal subunits (but not with 30S subunits that are part of 70S ribosomes or polysomes). Required for efficient processing of 16S rRNA. May interact with the 5'-terminal helix region of 16S rRNA. This Ureaplasma parvum serovar 3 (strain ATCC 27815 / 27 / NCTC 11736) protein is Ribosome-binding factor A.